A 525-amino-acid chain; its full sequence is Glutamate--cysteine ligase (525 aa).

This sequence belongs to the glutamate--cysteine ligase type 1 family. Type 1 subfamily.

The enzyme catalyses L-cysteine + L-glutamate + ATP = gamma-L-glutamyl-L-cysteine + ADP + phosphate + H(+). Its pathway is sulfur metabolism; glutathione biosynthesis; glutathione from L-cysteine and L-glutamate: step 1/2. The polypeptide is Glutamate--cysteine ligase (Vibrio vulnificus (strain CMCP6)).